Here is a 198-residue protein sequence, read N- to C-terminus: Undecaprenyl phosphate transporter A (198 aa).

5 helical membrane passes run 15-35 (MGYAGIAIGLMIEIIPSEIVL), 47-67 (IGFIGAIIAGVIGGTIAQIFI), 107-127 (VVFSARFIPVVRHAISIPAGI), 135-155 (FVVLTVLAIIPWSILFVYLGI), and 169-189 (GTYTTPIMILAVVVIALYFVI).

It belongs to the DedA family.

The protein localises to the cell membrane. Functionally, flippase that catalyzes the transport of undecaprenyl phosphate (UndP) across the cytoplasmic membrane, from the external side to the cytoplasmic side. Is involved in UndP recycling during peptidoglycan synthesis. The polypeptide is Undecaprenyl phosphate transporter A (Bacillus subtilis (strain 168)).